The sequence spans 140 residues: Nucleoside diphosphate kinase (140 aa).

Lysine 11, phenylalanine 59, arginine 87, threonine 93, arginine 104, and asparagine 114 together coordinate ATP. Histidine 117 functions as the Pros-phosphohistidine intermediate in the catalytic mechanism.

Belongs to the NDK family. In terms of assembly, homotetramer. Mg(2+) serves as cofactor.

The protein localises to the cytoplasm. It carries out the reaction a 2'-deoxyribonucleoside 5'-diphosphate + ATP = a 2'-deoxyribonucleoside 5'-triphosphate + ADP. The enzyme catalyses a ribonucleoside 5'-diphosphate + ATP = a ribonucleoside 5'-triphosphate + ADP. Major role in the synthesis of nucleoside triphosphates other than ATP. The ATP gamma phosphate is transferred to the NDP beta phosphate via a ping-pong mechanism, using a phosphorylated active-site intermediate. This Methylobacterium radiotolerans (strain ATCC 27329 / DSM 1819 / JCM 2831 / NBRC 15690 / NCIMB 10815 / 0-1) protein is Nucleoside diphosphate kinase.